A 152-amino-acid chain; its full sequence is MALYEHVFLARQDISAQQVDALVEQYKGVIEANGGKVGRIENWGLKSLTYRIKKNRKAHYALMDIDAPAAAIQEMERQMRISEDVLRYMTIAVEKHEEGPSAMLQKRDRDDRGPREGGDRGPRREFGDRPPRRDGDFQRGPRPDRAPREDRA.

The tract at residues 96-152 (HEEGPSAMLQKRDRDDRGPREGGDRGPRREFGDRPPRRDGDFQRGPRPDRAPREDRA) is disordered.

It belongs to the bacterial ribosomal protein bS6 family.

In terms of biological role, binds together with bS18 to 16S ribosomal RNA. The polypeptide is Small ribosomal subunit protein bS6 (Rhizobium etli (strain CIAT 652)).